The sequence spans 248 residues: UDP-2,3-diacylglucosamine hydrolase (248 aa).

Mn(2+) contacts are provided by Asp-8, His-10, Asp-41, Asn-79, and His-114. Substrate is bound at residue 79–80; it reads NR. Residues Asp-122, Asn-164, Arg-167, and His-195 each contribute to the substrate site. Residues His-195 and His-197 each coordinate Mn(2+).

Belongs to the LpxH family. It depends on Mn(2+) as a cofactor.

Its subcellular location is the cell inner membrane. It catalyses the reaction UDP-2-N,3-O-bis[(3R)-3-hydroxytetradecanoyl]-alpha-D-glucosamine + H2O = 2-N,3-O-bis[(3R)-3-hydroxytetradecanoyl]-alpha-D-glucosaminyl 1-phosphate + UMP + 2 H(+). Its pathway is glycolipid biosynthesis; lipid IV(A) biosynthesis; lipid IV(A) from (3R)-3-hydroxytetradecanoyl-[acyl-carrier-protein] and UDP-N-acetyl-alpha-D-glucosamine: step 4/6. Its function is as follows. Hydrolyzes the pyrophosphate bond of UDP-2,3-diacylglucosamine to yield 2,3-diacylglucosamine 1-phosphate (lipid X) and UMP by catalyzing the attack of water at the alpha-P atom. Involved in the biosynthesis of lipid A, a phosphorylated glycolipid that anchors the lipopolysaccharide to the outer membrane of the cell. The polypeptide is UDP-2,3-diacylglucosamine hydrolase (Wigglesworthia glossinidia brevipalpis).